A 198-amino-acid chain; its full sequence is Recombination protein RecR (198 aa).

A C4-type zinc finger spans residues 57-72 (CSICGNLTDDDPCHIC). Residues 80–175 (EIILVVEDSK…KVTRLARGLA (96 aa)) enclose the Toprim domain.

Belongs to the RecR family.

May play a role in DNA repair. It seems to be involved in an RecBC-independent recombinational process of DNA repair. It may act with RecF and RecO. The protein is Recombination protein RecR of Streptococcus equi subsp. equi (strain 4047).